Reading from the N-terminus, the 108-residue chain is UPF0145 protein Fnod_0426 (108 aa).

Belongs to the UPF0145 family.

The protein is UPF0145 protein Fnod_0426 of Fervidobacterium nodosum (strain ATCC 35602 / DSM 5306 / Rt17-B1).